Reading from the N-terminus, the 414-residue chain is Transcription factor FAMA (414 aa).

2 disordered regions span residues 1–61 and 142–197; these read MDKD…TPFD and KEDQ…SQRM. 2 stretches are compositionally biased toward low complexity: residues 12-24 and 35-49; these read GESS…NSSG and QQQQ…QQHQ. The span at 166–175 shows a compositional bias: basic and acidic residues; the sequence is RENKNVTKKE. The span at 176–185 shows a compositional bias: basic residues; sequence VKSKRKRART. The segment covering 187-197 has biased composition (basic and acidic residues); it reads KTSEEVESQRM. A bHLH domain is found at 194–245; that stretch reads SQRMTHIAVERNRRKQMNEHLRVLRSLMPGSYVQRGDQASIIGGAIEFVREL. The short motif at 249–253 is the LxCxE motif element; sequence LQCLE.

As to quaternary structure, interacts with FAMA through its LxCxE motif. Self-interacts. Also interacts with bHLH071 and bHLH093. Interacts with RBR1. Resctricted to stomatal cell lineages (at protein level). Expressed in roots, leaves, stems, and flowers.

The protein resides in the nucleus. In terms of biological role, transcription activator. Together with MYB88 and MYB124, ensures that stomata contain just two guard cells (GCs) by enforcing a single symmetric precursor cell division before stomatal maturity. Together with SPCH and MUTE, regulates the stomata formation. Required to promote differentiation and morphogenesis of stomatal guard cells and to halt proliferative divisions in their immediate precursors. Mediates the formation of stomata. Prevents histone H3K27me3 marks and derepresses stem cell gene expression. The sequence is that of Transcription factor FAMA (FAMA) from Arabidopsis thaliana (Mouse-ear cress).